Consider the following 156-residue polypeptide: Putative pre-16S rRNA nuclease (156 aa).

The protein belongs to the YqgF nuclease family.

The protein resides in the cytoplasm. Its function is as follows. Could be a nuclease involved in processing of the 5'-end of pre-16S rRNA. In Ehrlichia chaffeensis (strain ATCC CRL-10679 / Arkansas), this protein is Putative pre-16S rRNA nuclease.